We begin with the raw amino-acid sequence, 630 residues long: Cytochrome B pre-mRNA-processing protein 2 (630 aa).

The protein localises to the mitochondrion. In terms of biological role, appears to be specifically required for the splicing of the terminal intron (bI5) of the cytochrome b pre-mRNA. Can also stimulates the splicing of the omega intron of the precursor of large ribosomal RNA. The protein is Cytochrome B pre-mRNA-processing protein 2 (CBP2) of Saccharomyces paradoxus (Yeast).